Here is a 611-residue protein sequence, read N- to C-terminus: Pescadillo homolog (611 aa).

Residues 310-335 (VQMGDPDEASPGEEEQFVAHASKSAP) form a disordered region. Acidic residues predominate over residues 314–325 (DPDEASPGEEEQ). Residues 354-455 (PSSRLFAPYT…KILLEDTYAQ (102 aa)) form the BRCT domain. Disordered regions lie at residues 469–506 (YEGA…ESNT) and 545–611 (VKKA…AGGK). A compositionally biased stretch (acidic residues) spans 482–498 (ADMDVETDGEEGEADAS). 2 stretches are compositionally biased toward basic and acidic residues: residues 552 to 569 (KKPD…KDMN) and 579 to 602 (KLYE…EQRK). Positions 580–609 (LYEKMKYSQQKKAAEKEKLEQRKKQLQKAG) form a coiled coil.

It belongs to the pescadillo family. Component of the NOP7 complex, composed of ERB1, NOP7 and YTM1. The complex is held together by ERB1, which interacts with NOP7 via its N-terminal domain and with YTM1 via a high-affinity interaction between the seven-bladed beta-propeller domains of the 2 proteins. The NOP7 complex associates with the 66S pre-ribosome.

The protein resides in the nucleus. It localises to the nucleolus. The protein localises to the nucleoplasm. Functionally, component of the NOP7 complex, which is required for maturation of the 25S and 5.8S ribosomal RNAs and formation of the 60S ribosome. This is Pescadillo homolog from Coprinopsis cinerea (strain Okayama-7 / 130 / ATCC MYA-4618 / FGSC 9003) (Inky cap fungus).